A 562-amino-acid chain; its full sequence is MKNLLRALISQGIEALRANGTLPADSLPPDFVVERPKTRDHGDFATNAAMLLAKAARSNPRALAQALVEALPRSEDVSKVEIAGPGFINFHLAPAAYQREAASVIKEAHDYGRNLSGNGRTVGVEYVSANPTGPLHVGHGRAAAIGDCVARVLDANGWNAKREFYYNDAGVQIENLALSTQARIKGIAPDQDGWPEGGYRGEYIADVARAYMAGASVDLEGSTVVGAKDPDDMQAIRRFAVAYLRNEQNLDLAAFGVDFDIYFLESSLYADGKVAEAVAKLQASGHTYEEGGALWLRSTDFGDDKDRVMRKSDGTFTYFVPDVAYHLSKWQRGYERAITELGADHHGSLARVRAGLQAMEVGIPQGWPEYVLHQMVTVMRGGEEVKLSKRAGSYFTLRDLIEEAGRDATRWFLIARKPDSQLTFDIDLARQQSNDNPVFYVQYAHARVCSLLRQAQEKGLVYEQGNGLANLGRLADDASLLLMNEISRYPEVVEAAGVALEPHLVAQYLRELAHAFHTWYHGTPVLVEDAADRNAKLTLACAARQVLANGLELLGVSAPEKM.

The short motif at 129 to 139 is the 'HIGH' region element; that stretch reads ANPTGPLHVGH.

Belongs to the class-I aminoacyl-tRNA synthetase family. In terms of assembly, monomer.

It localises to the cytoplasm. The catalysed reaction is tRNA(Arg) + L-arginine + ATP = L-arginyl-tRNA(Arg) + AMP + diphosphate. This Stenotrophomonas maltophilia (strain K279a) protein is Arginine--tRNA ligase.